A 356-amino-acid polypeptide reads, in one-letter code: S-adenosylmethionine:tRNA ribosyltransferase-isomerase (356 aa).

This sequence belongs to the QueA family. As to quaternary structure, monomer.

The protein resides in the cytoplasm. It carries out the reaction 7-aminomethyl-7-carbaguanosine(34) in tRNA + S-adenosyl-L-methionine = epoxyqueuosine(34) in tRNA + adenine + L-methionine + 2 H(+). It functions in the pathway tRNA modification; tRNA-queuosine biosynthesis. In terms of biological role, transfers and isomerizes the ribose moiety from AdoMet to the 7-aminomethyl group of 7-deazaguanine (preQ1-tRNA) to give epoxyqueuosine (oQ-tRNA). The protein is S-adenosylmethionine:tRNA ribosyltransferase-isomerase of Citrobacter koseri (strain ATCC BAA-895 / CDC 4225-83 / SGSC4696).